Consider the following 379-residue polypeptide: Acetylajmalan esterase 1 (379 aa).

A signal peptide spans 1–20 (MGFAPLLVFSLFVFAGTTKG). Serine 34 acts as the Nucleophile in catalysis. N-linked (GlcNAc...) asparagine glycosylation is found at asparagine 96, asparagine 178, asparagine 197, and asparagine 291. Residues aspartate 332 and histidine 335 contribute to the active site.

Belongs to the 'GDSL' lipolytic enzyme family. Expressed in roots and leaves at low levels.

It catalyses the reaction 17-O-acetylnorajmaline + H2O = norajmaline + acetate + H(+). It carries out the reaction 17-O-acetylajmaline + H2O = ajmaline + acetate + H(+). The protein operates within alkaloid biosynthesis; ajmaline biosynthesis. Acetylesterase involved in the biosynthesis of ajmaline-type monoterpenoid indole alkaloids (MIAs) natural products, important plant-derived pharmaceuticals used in the therapy of heart disorders. Deacetylates 17-O-acetylnorajmaline to produce norajmaline. May also catalyze the conversion of 17-O-acetylajmaline to ajmaline. In Rauvolfia serpentina (Serpentine wood), this protein is Acetylajmalan esterase 1.